A 221-amino-acid chain; its full sequence is Ribonuclease HII (221 aa).

One can recognise an RNase H type-2 domain in the interval 29–220 (RRVAGVDEVG…LRDLQAGEIG (192 aa)). Residues D35, E36, and D129 each contribute to the a divalent metal cation site. A disordered region spans residues 198-221 (LGPSPQHRRSFAPLRDLQAGEIGG).

This sequence belongs to the RNase HII family. Requires Mn(2+) as cofactor. Mg(2+) is required as a cofactor.

The protein localises to the cytoplasm. It carries out the reaction Endonucleolytic cleavage to 5'-phosphomonoester.. Its function is as follows. Endonuclease that specifically degrades the RNA of RNA-DNA hybrids. The polypeptide is Ribonuclease HII (Synechococcus sp. (strain JA-3-3Ab) (Cyanobacteria bacterium Yellowstone A-Prime)).